The following is a 1228-amino-acid chain: Apical endosomal glycoprotein (1228 aa).

The signal sequence occupies residues Met1–Gly21. At Thr23–Pro1159 the chain is on the extracellular side. Residues His28–Glu49 form the LDL-receptor class A 1; truncated domain. Positions Phe65 to Leu223 constitute an MAM 1 domain. N-linked (GlcNAc...) asparagine glycosylation occurs at Asn204. Residues Arg229–Ser267 enclose the LDL-receptor class A 2 domain. 3 cysteine pairs are disulfide-bonded: Cys230–Cys242, Cys237–Cys255, and Cys249–Cys266. The 157-residue stretch at Met270–Leu426 folds into the MAM 2 domain. N-linked (GlcNAc...) asparagine glycans are attached at residues Asn290 and Asn340. Residues Thr457 to Gly492 enclose the LDL-receptor class A 3 domain. 3 cysteine pairs are disulfide-bonded: Cys458/Cys469, Cys465/Cys482, and Cys476/Cys491. 4 MAM domains span residues Gly492–Pro649, Leu659–Ala815, Lys817–Gln975, and Gly977–Gln1144. N-linked (GlcNAc...) asparagine glycosylation is present at Asn641. N-linked (GlcNAc...) asparagine glycosylation occurs at Asn841. Residues Val1160–Trp1180 form a helical membrane-spanning segment. Residues His1181–Ala1228 lie on the Cytoplasmic side of the membrane.

The protein resides in the membrane. Functionally, probably involved in the sorting and selective transport of receptors and ligands across polarized epithelia. In Mus musculus (Mouse), this protein is Apical endosomal glycoprotein.